Consider the following 450-residue polypeptide: UPF0236 protein in vanSb 3'region (450 aa).

This sequence belongs to the UPF0236 family.

The polypeptide is UPF0236 protein in vanSb 3'region (Streptococcus gallolyticus (Streptococcus bovis biotype I)).